Consider the following 349-residue polypeptide: Peroxisomal acyl-coenzyme A thioester hydrolase 1 (349 aa).

Catalysis depends on charge relay system residues aspartate 259, serine 282, and glutamine 333. A Microbody targeting signal motif is present at residues 347 to 349 (AKF).

Belongs to the C/M/P thioester hydrolase family.

It is found in the peroxisome. It catalyses the reaction hexadecanoyl-CoA + H2O = hexadecanoate + CoA + H(+). In terms of biological role, acyl-coenzyme A (acyl-CoA) thioesterases are a group of enzymes that catalyze the hydrolysis of acyl-CoAs to the free fatty acid and coenzyme A (CoASH), providing the potential to regulate intracellular levels of acyl-CoAs, free fatty acids and CoASH. Contributes to growth on fatty acids. In Saccharomyces cerevisiae (strain ATCC 204508 / S288c) (Baker's yeast), this protein is Peroxisomal acyl-coenzyme A thioester hydrolase 1 (TES1).